Consider the following 104-residue polypeptide: Large ribosomal subunit protein uL24 (104 aa).

This sequence belongs to the universal ribosomal protein uL24 family. Part of the 50S ribosomal subunit.

One of two assembly initiator proteins, it binds directly to the 5'-end of the 23S rRNA, where it nucleates assembly of the 50S subunit. Its function is as follows. One of the proteins that surrounds the polypeptide exit tunnel on the outside of the subunit. The polypeptide is Large ribosomal subunit protein uL24 (Pseudomonas fluorescens (strain Pf0-1)).